A 305-amino-acid polypeptide reads, in one-letter code: UDP-3-O-acyl-N-acetylglucosamine deacetylase (305 aa).

Residues His-79, His-238, and Asp-242 each coordinate Zn(2+). His-265 serves as the catalytic Proton donor.

This sequence belongs to the LpxC family. The cofactor is Zn(2+).

It catalyses the reaction a UDP-3-O-[(3R)-3-hydroxyacyl]-N-acetyl-alpha-D-glucosamine + H2O = a UDP-3-O-[(3R)-3-hydroxyacyl]-alpha-D-glucosamine + acetate. It participates in glycolipid biosynthesis; lipid IV(A) biosynthesis; lipid IV(A) from (3R)-3-hydroxytetradecanoyl-[acyl-carrier-protein] and UDP-N-acetyl-alpha-D-glucosamine: step 2/6. In terms of biological role, catalyzes the hydrolysis of UDP-3-O-myristoyl-N-acetylglucosamine to form UDP-3-O-myristoylglucosamine and acetate, the committed step in lipid A biosynthesis. The protein is UDP-3-O-acyl-N-acetylglucosamine deacetylase of Salmonella agona (strain SL483).